The sequence spans 200 residues: Nucleoside triphosphate pyrophosphatase (200 aa).

The active-site Proton acceptor is the aspartate 79.

Belongs to the Maf family. It depends on a divalent metal cation as a cofactor.

The protein resides in the cytoplasm. The catalysed reaction is a ribonucleoside 5'-triphosphate + H2O = a ribonucleoside 5'-phosphate + diphosphate + H(+). It carries out the reaction a 2'-deoxyribonucleoside 5'-triphosphate + H2O = a 2'-deoxyribonucleoside 5'-phosphate + diphosphate + H(+). Functionally, nucleoside triphosphate pyrophosphatase. May have a dual role in cell division arrest and in preventing the incorporation of modified nucleotides into cellular nucleic acids. The chain is Nucleoside triphosphate pyrophosphatase from Legionella pneumophila (strain Paris).